The following is an 89-amino-acid chain: Small ribosomal subunit protein uS14 (89 aa).

Belongs to the universal ribosomal protein uS14 family. In terms of assembly, part of the 30S ribosomal subunit. Contacts proteins S3 and S10.

Its function is as follows. Binds 16S rRNA, required for the assembly of 30S particles and may also be responsible for determining the conformation of the 16S rRNA at the A site. The chain is Small ribosomal subunit protein uS14 from Shouchella clausii (strain KSM-K16) (Alkalihalobacillus clausii).